A 366-amino-acid chain; its full sequence is Growth hormone secretagogue receptor type 1 (366 aa).

Topologically, residues 1–40 are extracellular; the sequence is MWNATLSEEPGYNLTLPDLGWDAPADNDSLTDELLPLFPA. N3, N13, and N27 each carry an N-linked (GlcNAc...) asparagine glycan. Residues 41-66 form a helical membrane-spanning segment; sequence PLLAGVTATCVALFVVGIAGNLLTML. The Cytoplasmic portion of the chain corresponds to 67-72; it reads VVSRFR. The chain crosses the membrane as a helical span at residues 73 to 96; the sequence is ELRTTTNLYLSSMAFSDLLIFLCM. Residues 97-117 lie on the Extracellular side of the membrane; the sequence is PLDLVRLWQYRPWNFGDLLCK. C116 and C198 are disulfide-bonded. The chain crosses the membrane as a helical span at residues 118-139; sequence LFQFVSESCTYATVLTITALSV. Residues 140-162 lie on the Cytoplasmic side of the membrane; that stretch reads ERYFAICFPLRAKVVVTKGRVKL. The helical transmembrane segment at 163 to 183 threads the bilayer; the sequence is VILVIWAVAFCSAGPIFVLVG. Residues 184-211 lie on the Extracellular side of the membrane; it reads VEHENGTDPRDTNECRATEFAVRSGLLT. N-linked (GlcNAc...) asparagine glycosylation occurs at N188. The helical transmembrane segment at 212 to 235 threads the bilayer; that stretch reads VMVWVSSVFFFLPVFCLTVLYSLI. Topologically, residues 236-263 are cytoplasmic; it reads GRKLWRRKRGEAAVGASLRDQNHKQTVK. Residues 264–285 form a helical membrane-spanning segment; that stretch reads MLAVVVFAFILCWLPFHVGRYL. Over 286–302 the chain is Extracellular; sequence FSKSFEPGSLEIAQISQ. Residues 303-326 form a helical membrane-spanning segment; sequence YCNLVSFVLFYLSAAINPILYNIM. At 327–366 the chain is on the cytoplasmic side; the sequence is SKKYRVAVFKLLGFEPFSQRKLSTLKDESSRAWTETSINT.

Belongs to the G-protein coupled receptor 1 family.

The protein resides in the cell membrane. Receptor for ghrelin, coupled to G-alpha-11 proteins. Stimulates growth hormone secretion. Also binds other growth hormone releasing peptides (GHRP) (e.g. Met-enkephalin and GHRP-6) as well as non-peptide, low molecular weight secretagogues (e.g. L-692,429, MK-0677, adenosine). The sequence is that of Growth hormone secretagogue receptor type 1 (GHSR) from Mustela putorius furo (European domestic ferret).